Here is a 319-residue protein sequence, read N- to C-terminus: Cytochrome f (319 aa).

Positions 1–35 (MQNRNISYWIKKCVIQSISIVILMKIIAWPSISEA) are cleaved as a signal peptide. The heme site is built by Tyr-36, Cys-56, Cys-59, and His-60. The helical transmembrane segment at 285-305 (VQSLLVFFVSVTLAQIFLVLK) threads the bilayer.

This sequence belongs to the cytochrome f family. The 4 large subunits of the cytochrome b6-f complex are cytochrome b6, subunit IV (17 kDa polypeptide, petD), cytochrome f and the Rieske protein, while the 4 small subunits are PetG, PetL, PetM and PetN. The complex functions as a dimer. Heme is required as a cofactor.

The protein resides in the plastid. It localises to the chloroplast thylakoid membrane. Functionally, component of the cytochrome b6-f complex, which mediates electron transfer between photosystem II (PSII) and photosystem I (PSI), cyclic electron flow around PSI, and state transitions. In Physcomitrium patens (Spreading-leaved earth moss), this protein is Cytochrome f.